The primary structure comprises 688 residues: Elongation factor G (688 aa).

One can recognise a tr-type G domain in the interval 8-282 (EKTRNIGIMA…AIIDYLPSPM (275 aa)). Residues 17 to 24 (AHIDAGKT), 81 to 85 (DTPGH), and 135 to 138 (NKMD) each bind GTP.

The protein belongs to the TRAFAC class translation factor GTPase superfamily. Classic translation factor GTPase family. EF-G/EF-2 subfamily.

The protein localises to the cytoplasm. In terms of biological role, catalyzes the GTP-dependent ribosomal translocation step during translation elongation. During this step, the ribosome changes from the pre-translocational (PRE) to the post-translocational (POST) state as the newly formed A-site-bound peptidyl-tRNA and P-site-bound deacylated tRNA move to the P and E sites, respectively. Catalyzes the coordinated movement of the two tRNA molecules, the mRNA and conformational changes in the ribosome. This is Elongation factor G from Phytoplasma mali (strain AT).